Reading from the N-terminus, the 241-residue chain is UDP-2,3-diacylglucosamine hydrolase (241 aa).

Residues Asp8, His10, Asp41, Asn78, and His113 each contribute to the Mn(2+) site. 78 to 79 (NR) serves as a coordination point for substrate. Substrate contacts are provided by Asp121, Ser159, Asn163, Lys166, and His194. The Mn(2+) site is built by His194 and His196.

It belongs to the LpxH family. It depends on Mn(2+) as a cofactor.

The protein resides in the cell inner membrane. It carries out the reaction UDP-2-N,3-O-bis[(3R)-3-hydroxytetradecanoyl]-alpha-D-glucosamine + H2O = 2-N,3-O-bis[(3R)-3-hydroxytetradecanoyl]-alpha-D-glucosaminyl 1-phosphate + UMP + 2 H(+). Its pathway is glycolipid biosynthesis; lipid IV(A) biosynthesis; lipid IV(A) from (3R)-3-hydroxytetradecanoyl-[acyl-carrier-protein] and UDP-N-acetyl-alpha-D-glucosamine: step 4/6. Its function is as follows. Hydrolyzes the pyrophosphate bond of UDP-2,3-diacylglucosamine to yield 2,3-diacylglucosamine 1-phosphate (lipid X) and UMP by catalyzing the attack of water at the alpha-P atom. Involved in the biosynthesis of lipid A, a phosphorylated glycolipid that anchors the lipopolysaccharide to the outer membrane of the cell. The protein is UDP-2,3-diacylglucosamine hydrolase of Shewanella putrefaciens (strain CN-32 / ATCC BAA-453).